The following is a 303-amino-acid chain: MKKQALICALLATVLLPGCSEDGENTPQPTDGRVALEATSGIRMNTRAYDKTWEAGDAIGIYMLNGDATDGNGNRKYTTAQTAENGSFTAAEGQTIYFPVDASQRDFVAYYPYRETLADGNVYTVDVSVQTPQKDIDLMGAAKVEGKDKTDPKVAFVFTHKLVKLDITIKADGTSLTDADLAGTTVSISNQQTAATYNVVTGGDATVTTGTTKEIVLHTDGLKAEGIVLPAASTAGMALTFTVPGLEGQAFHWDVNSAAQSKAFVAGSKYLYTITISKAGVEVSSKVEDWTPGNGGGETGNAE.

The N-terminal stretch at 1-22 (MKKQALICALLATVLLPGCSED) is a signal peptide.

Belongs to the bacteroidetes fimbrillin superfamily. Mfa-like family. May be part of the fimbrial tip.

Its subcellular location is the fimbrium. In terms of biological role, putative component of the fimbrium tip. Fimbriae are filamentous appendages on the cell surface that mediate cell adhesion and biofilm formation. The sequence is that of Putative fimbrium subunit Fim1C (fim1C) from Bacteroides uniformis (strain ATCC 8492 / DSM 6597 / CCUG 4942 / CIP 103695 / JCM 5828 / KCTC 5204 / NCTC 13054 / VPI 0061).